Reading from the N-terminus, the 118-residue chain is Basic phospholipase A2 3 (118 aa).

Intrachain disulfides connect Cys-11/Cys-71, Cys-27/Cys-117, Cys-29/Cys-45, Cys-44/Cys-98, Cys-51/Cys-91, Cys-60/Cys-84, and Cys-78/Cys-89. Tyr-28, Gly-30, and Gly-32 together coordinate Ca(2+). Residue His-48 is part of the active site. Asp-49 contacts Ca(2+). Asp-92 is an active-site residue.

This sequence belongs to the phospholipase A2 family. Group I subfamily. D49 sub-subfamily. In terms of assembly, monomer. It depends on Ca(2+) as a cofactor. Expressed by the venom gland.

It is found in the secreted. It catalyses the reaction a 1,2-diacyl-sn-glycero-3-phosphocholine + H2O = a 1-acyl-sn-glycero-3-phosphocholine + a fatty acid + H(+). Functionally, PLA2 catalyzes the calcium-dependent hydrolysis of the 2-acyl groups in 3-sn-phosphoglycerides. This chain is Basic phospholipase A2 3, found in Laticauda semifasciata (Black-banded sea krait).